The following is a 219-amino-acid chain: Small ribosomal subunit protein uS3c (219 aa).

Positions 39–111 (IRKFLMEKIK…NSFFNVKINF (73 aa)) constitute a KH type-2 domain.

The protein belongs to the universal ribosomal protein uS3 family. As to quaternary structure, part of the 30S ribosomal subunit.

The protein localises to the plastid. The protein is Small ribosomal subunit protein uS3c (rps3) of Euglena longa (Euglenophycean alga).